A 131-amino-acid chain; its full sequence is Ribosome-binding factor A (131 aa).

It belongs to the RbfA family. As to quaternary structure, monomer. Binds 30S ribosomal subunits, but not 50S ribosomal subunits or 70S ribosomes.

It localises to the cytoplasm. Functionally, one of several proteins that assist in the late maturation steps of the functional core of the 30S ribosomal subunit. Associates with free 30S ribosomal subunits (but not with 30S subunits that are part of 70S ribosomes or polysomes). Required for efficient processing of 16S rRNA. May interact with the 5'-terminal helix region of 16S rRNA. This chain is Ribosome-binding factor A, found in Pseudomonas fluorescens (strain SBW25).